We begin with the raw amino-acid sequence, 130 residues long: Phosphoribosyl-AMP cyclohydrolase 1 (130 aa).

Residue Asp77 coordinates Mg(2+). Residue Cys78 participates in Zn(2+) binding. Mg(2+)-binding residues include Asp79 and Asp81. Zn(2+)-binding residues include Cys95 and Cys102.

This sequence belongs to the PRA-CH family. In terms of assembly, homodimer. Requires Mg(2+) as cofactor. The cofactor is Zn(2+).

The protein resides in the cytoplasm. The enzyme catalyses 1-(5-phospho-beta-D-ribosyl)-5'-AMP + H2O = 1-(5-phospho-beta-D-ribosyl)-5-[(5-phospho-beta-D-ribosylamino)methylideneamino]imidazole-4-carboxamide. It participates in amino-acid biosynthesis; L-histidine biosynthesis; L-histidine from 5-phospho-alpha-D-ribose 1-diphosphate: step 3/9. In terms of biological role, catalyzes the hydrolysis of the adenine ring of phosphoribosyl-AMP. This Pseudomonas fluorescens (strain ATCC BAA-477 / NRRL B-23932 / Pf-5) protein is Phosphoribosyl-AMP cyclohydrolase 1.